The sequence spans 422 residues: Tyrosine--tRNA ligase 1 (422 aa).

Tyr35 provides a ligand contact to L-tyrosine. Residues 40 to 49 (PTADSLHIGH) carry the 'HIGH' region motif. The L-tyrosine site is built by Tyr170 and Gln174. A 'KMSKS' region motif is present at residues 232–236 (KFGKT). Lys235 contributes to the ATP binding site. An S4 RNA-binding domain is found at 355–421 (LSLVDVLVQS…GKKKYFLVTY (67 aa)).

The protein belongs to the class-I aminoacyl-tRNA synthetase family. TyrS type 1 subfamily. Homodimer.

The protein resides in the cytoplasm. The enzyme catalyses tRNA(Tyr) + L-tyrosine + ATP = L-tyrosyl-tRNA(Tyr) + AMP + diphosphate + H(+). Its function is as follows. Catalyzes the attachment of tyrosine to tRNA(Tyr) in a two-step reaction: tyrosine is first activated by ATP to form Tyr-AMP and then transferred to the acceptor end of tRNA(Tyr). This is Tyrosine--tRNA ligase 1 from Bacillus subtilis (strain 168).